Consider the following 308-residue polypeptide: MGEVKVSPDYNWFRGTVPLKKIIVDDDDSKIWSLYDAGPRSIRCPLIFLPPVSGTADVFFRQILALTGWGYRVIALQYPVYWDHLEFCDGFRKLLDHLQLDKVHLFGASLGGFLAQKFAEYTHKSPRVHSLILCNSFSDTSIFNQTWTANSFWLMPAFMLKKIVLGNFSSGPVDPMMADAIDFMVDRLESLGQSELASRLTLNCQNSYVEPHKIRDIPVTIMDVFDQSALSTEAKEEMYKLYPNARRAHLKTGGNFPYLCRSAEVNLYVQIHLLQFHGTKYAAIDPSMVSAEELEVQKGSLGINQEEQ.

The AB hydrolase-1 domain maps to 87-159; that stretch reads FCDGFRKLLD…NSFWLMPAFM (73 aa).

The protein belongs to the AB hydrolase superfamily. As to quaternary structure, interacts with CD4. Interacts with ALDH16A1.

It is found in the cytoplasm. Functionally, may play a role as a negative regulatory factor in CD4-dependent T-cell activation. The polypeptide is Maspardin (SPG21) (Macaca fascicularis (Crab-eating macaque)).